The primary structure comprises 1534 residues: Ribosome-binding protein 1 (1534 aa).

Topologically, residues 1–7 (MDIYDTQ) are lumenal. The helical transmembrane segment at 8–28 (TLGVMVFGGFMVVSAIGIFLV) threads the bilayer. The Cytoplasmic portion of the chain corresponds to 29–1534 (STFSMKETSY…DSSSKEGTSV (1506 aa)). Disordered regions lie at residues 45 to 91 (QRKE…PAPN) and 125 to 152 (PAMPQEKLAPSPKDKKKKEKKVAKVEPA). Basic residues predominate over residues 52–63 (THHQKVEKKKKE). The segment covering 64–88 (KTVEKKGKTKKKEEKPNGKIPDHEP) has biased composition (basic and acidic residues). The span at 125–135 (PAMPQEKLAPS) shows a compositional bias: low complexity. A Glycyl lysine isopeptide (Lys-Gly) (interchain with G-Cter in SUMO2) cross-link involves residue lysine 148. 2 positions are modified to phosphoserine: serine 159 and serine 165. Disordered regions lie at residues 173–780 (APKE…PLYL), 968–987 (KELVEKSEAARQEEQQRKAL), and 1021–1082 (RELC…RAEN). Positions 175–194 (KEVPMVVVPPVGAKAGTPAT) are enriched in low complexity. Repeat copies occupy residues 197 to 206 (AQGKKAEGAQ), 207 to 216 (NQSRKAEGAP), 217 to 226 (NQGKKAEGAL), 227 to 236 (NQGKKAEGAQ), 237 to 246 (NQGKKVEVAP), 247 to 256 (NQGKKAEGGQ), 257 to 266 (NQGKKVEGAQ), 267 to 276 (NQGKKAEGTP), 277 to 286 (NQGKKAEGAP), 287 to 296 (NQGKKTDGAP), 297 to 306 (NQGKKSEGAP), 307 to 316 (NQGKKAEGAQ), 317 to 326 (NQGKKVEVAP), 327 to 336 (NQGKKAEGGQ), 337 to 346 (NQGKKVEGAQ), 347 to 356 (NQGKKAEGTP), 357 to 366 (NQGKKAEGAP), 367 to 376 (NQGKKTDGAP), 377 to 386 (NQGKKSEGAP), 387 to 396 (NQGKKVEGAQ), 397 to 406 (NQGKKVEGVQ), 407 to 416 (NQGKKAEGAQ), 417 to 426 (NQGKKAEGTS), 427 to 436 (SQGRKEEGTP), 437 to 446 (NLGKKAEGSP), 447 to 456 (NQGKKVEVVQ), 457 to 466 (NQSKKVEGAP), 467 to 476 (NQGKKAEGSQ), 477 to 486 (NQGKKTEGAS), 487 to 496 (NQGKKVDGAQ), 497 to 506 (NQGKKAEGAP), 507 to 516 (NQGKKVEGAQ), 517 to 526 (NQGKKAEGTP), 527 to 536 (NQGKKAEGAQ), 537 to 546 (NQGKKAEGAP), 547 to 556 (NQGKKAEGAP), 557 to 566 (NQGKKAEGAP), 567 to 576 (NQGKKAEGAP), 577 to 586 (NQGKKAEAAP), 587 to 596 (NQGKKAEGAP), 597 to 606 (NQGKKAEGAP), 607 to 616 (NQGKKAEAAP), 617 to 626 (NQGKKAEGAP), 627 to 636 (NQGKKAEGAP), 637 to 646 (NQGKKAEGAP), 647 to 656 (NQGKKAEGAQ), 657 to 666 (NQGKKAEGAP), 667 to 676 (NQGKKADLVA), 677 to 686 (NQGTKAEGVA), 687 to 696 (GQGKKAEGAP), 697 to 706 (NQGKKGEGTP), 707 to 716 (NQGKKSEGSP), 717 to 726 (NQGKKVDASA), and 727 to 736 (NQSKRAESAP). The 54 X 10 AA tandem repeats of [NASG]-[QL]-[GS]-[KRT]-[KR]-[AVTSEG]-[ED]-[AGVLS]-[ATGSV]-[PQLSA] stretch occupies residues 197 to 736 (AQGKKAEGAQ…NQSKRAESAP (540 aa)). The residue at position 275 (threonine 275) is a Phosphothreonine. The segment covering 395-428 (AQNQGKKVEGVQNQGKKAEGAQNQGKKAEGTSSQ) has biased composition (polar residues). Residues 474-499 (GSQNQGKKTEGASNQGKKVDGAQNQG) are compositionally biased toward polar residues. The span at 705–718 (TPNQGKKSEGSPNQ) shows a compositional bias: polar residues. Serine 715 is subject to Phosphoserine. At serine 747 the chain carries Phosphoserine. Lysine 752 participates in a covalent cross-link: Glycyl lysine isopeptide (Lys-Gly) (interchain with G-Cter in SUMO1). Serine 1032 carries the phosphoserine modification. Residues 1059-1080 (AEVKSKSEELSGLHGQLKEARA) are compositionally biased toward basic and acidic residues. Lysine 1064 is subject to N6-acetyllysine. Residues serine 1091 and serine 1110 each carry the phosphoserine modification. Disordered regions lie at residues 1224–1251 (ELLKQRPADTDPSSDLASKLREAEETQN), 1391–1416 (KSHVEDGDVAGSPAAPPAEQDPVELK), and 1509–1534 (ERDTVKKLQEQLDKTDDSSSKEGTSV). Basic and acidic residues predominate over residues 1509 to 1528 (ERDTVKKLQEQLDKTDDSSS).

It is found in the endoplasmic reticulum membrane. Functionally, acts as a ribosome receptor and mediates interaction between the ribosome and the endoplasmic reticulum membrane. The protein is Ribosome-binding protein 1 (RRBP1) of Canis lupus familiaris (Dog).